Here is a 177-residue protein sequence, read N- to C-terminus: Large ribosomal subunit protein uL6 (177 aa).

This sequence belongs to the universal ribosomal protein uL6 family. Part of the 50S ribosomal subunit.

Its function is as follows. This protein binds to the 23S rRNA, and is important in its secondary structure. It is located near the subunit interface in the base of the L7/L12 stalk, and near the tRNA binding site of the peptidyltransferase center. In Natronomonas pharaonis (strain ATCC 35678 / DSM 2160 / CIP 103997 / JCM 8858 / NBRC 14720 / NCIMB 2260 / Gabara) (Halobacterium pharaonis), this protein is Large ribosomal subunit protein uL6.